Consider the following 842-residue polypeptide: Homeobox-leucine zipper protein REVOLUTA (842 aa).

The disordered stretch occupies residues M1–L20. Basic and acidic residues predominate over residues N7–L20. The segment at residues S22–K85 is a DNA-binding region (homeobox). The stretch at L90–E121 forms a coiled coil. An START domain is found at D151–V379.

Belongs to the HD-ZIP homeobox family. Class III subfamily. Homodimer. Heterodimer with ZPR1, ZPR2, ZPR3 or ZPR4. Interacts with ESR1 and ESR2. Interacts with ZPR1, ZPR2, ZPR3 and ZPR4. Heterodimerization with ZPR3 prevents DNA binding by REV. In terms of tissue distribution, expressed in the interfascicular regions of stem and vascular bundles of young roots and leaves.

Its subcellular location is the nucleus. Functionally, probable transcription factor involved in the regulation of interfascicular fiber (cortical cells) and secondary xylem differentiation in the inflorescence stems. Required for lateral shoot meristems (LSMs) and flower meristems (FMs) initiation. May be involved in the determination of vascular patterning and organ polarity. Directly regulates the expression of AGO10, ZPR1, ZPR2, ZPR3 and ZPR4. Required to regulate adaxial-abaxial polarity and leaf axial patterning. The chain is Homeobox-leucine zipper protein REVOLUTA from Arabidopsis thaliana (Mouse-ear cress).